We begin with the raw amino-acid sequence, 383 residues long: Geranylgeranyl pyrophosphate synthase esdpD (383 aa).

Residues K88, R91, and H120 each coordinate isopentenyl diphosphate. Mg(2+) contacts are provided by D150 and D154. Residue R159 participates in dimethylallyl diphosphate binding. Residue R160 participates in isopentenyl diphosphate binding. Residues K237, T238, and Q271 each coordinate dimethylallyl diphosphate. Residue D274 participates in Mg(2+) binding. The dimethylallyl diphosphate site is built by N278, K288, and K298.

This sequence belongs to the FPP/GGPP synthase family. Mg(2+) is required as a cofactor.

It carries out the reaction isopentenyl diphosphate + dimethylallyl diphosphate = (2E)-geranyl diphosphate + diphosphate. It catalyses the reaction isopentenyl diphosphate + (2E)-geranyl diphosphate = (2E,6E)-farnesyl diphosphate + diphosphate. The catalysed reaction is isopentenyl diphosphate + (2E,6E)-farnesyl diphosphate = (2E,6E,10E)-geranylgeranyl diphosphate + diphosphate. The protein operates within secondary metabolite biosynthesis; terpenoid biosynthesis. In terms of biological role, geranylgeranyl pyrophosphate synthase; part of the cluster that mediates the biosynthesis of shearones, diterpenoid pyrones (DPs) which are structurally diverse meroterpenoids consisting of a diterpene linked by a pyrone, and which may exhibit a range of bioactivities. Within the pathway, esdpD takes part to the biosynthesis of the molecular scaffold by providing geranylgeranyl pyrophosphate (GGPP) to the prenyltransferase esdpC for C-3 geranylgeranylation of the alpha-pyrone. The molecular scaffold is commonly biosynthesized by a series of enzymes including the non-reducing polyketide synthase (NR-PKS) esdpA that generates an alpha-pyrone; the prenyltransferase esdpC that attaches a geranylgeranyl pyrophosphate (GGPP) produced by the GGPP synthase (GGPPS) esdpD onto the pyrone unit; the FAD-dependent monooxygenase esdpE that converts an olefin on the diterpene unit into an epoxide; and the terpene cyclase esdpB that catalyzes the cyclization reactions to give the molecular backbone shearone A. In the modification steps, esdpF oxidizes the hydroxy group to a ketone at C-3 and esdpG then attaches hydroxy groups at both C-11 and C-12. After that, esdpI hydroxylates at C-20 and esdpH hydroxylates at C-6'. The ether bridge is generated by nucleophilic attack of the hydroxy group at C-20 to the carbonyl carbon at C-3. EsdpH can also functions prior to esdpI. The different combinations of these modification enzymes lead to the production of diverse shearone derivatives, shearone I being the end product of the pathway. The alpha-ketoglutarate-dependent dioxygenase esdpJ seems not to be involved in this pathway. The polypeptide is Geranylgeranyl pyrophosphate synthase esdpD (Penicillium shearii (Eupenicillium shearii)).